A 264-amino-acid chain; its full sequence is Acyl-[acyl-carrier-protein]--UDP-N-acetylglucosamine O-acyltransferase (264 aa).

It belongs to the transferase hexapeptide repeat family. LpxA subfamily. Homotrimer.

It is found in the cytoplasm. The catalysed reaction is a (3R)-hydroxyacyl-[ACP] + UDP-N-acetyl-alpha-D-glucosamine = a UDP-3-O-[(3R)-3-hydroxyacyl]-N-acetyl-alpha-D-glucosamine + holo-[ACP]. Its pathway is glycolipid biosynthesis; lipid IV(A) biosynthesis; lipid IV(A) from (3R)-3-hydroxytetradecanoyl-[acyl-carrier-protein] and UDP-N-acetyl-alpha-D-glucosamine: step 1/6. Functionally, involved in the biosynthesis of lipid A, a phosphorylated glycolipid that anchors the lipopolysaccharide to the outer membrane of the cell. In Rickettsia typhi (strain ATCC VR-144 / Wilmington), this protein is Acyl-[acyl-carrier-protein]--UDP-N-acetylglucosamine O-acyltransferase.